The primary structure comprises 1605 residues: Ribosome-binding protein 1 (1605 aa).

Residues 1 to 7 are Lumenal-facing; that stretch reads MDIYDTQ. The helical transmembrane segment at 8 to 28 threads the bilayer; it reads TLGVVVFGGFMVVSAIGIFLV. Over 29–1605 the chain is Cytoplasmic; that stretch reads STFSMKETSY…GSSSKEGTSV (1577 aa). A disordered region spans residues 44–88; that stretch reads NQRKEMAKTHHQKGEKKKKEKTVEKKGKTKKKEEKPNGKIPEHDL. Over residues 52 to 63 the composition is skewed to basic residues; sequence THHQKGEKKKKE. Positions 64-88 are enriched in basic and acidic residues; that stretch reads KTVEKKGKTKKKEEKPNGKIPEHDL. Phosphoserine is present on S111. Positions 114 to 150 are disordered; the sequence is SSVGHTPIATVPAMPQEKLASSPKDRKKKEKKVAKVE. A Glycyl lysine isopeptide (Lys-Gly) (interchain with G-Cter in SUMO2) cross-link involves residue K148. S159 and S165 each carry phosphoserine. Residues 172-849 form a disordered region; the sequence is ATPKEVPMVA…PGPPDCDGPL (678 aa). Tandem repeats lie at residues 196–205, 206–215, 216–225, 226–235, 236–245, 246–255, 256–265, 266–275, 276–285, 286–295, 296–305, 306–315, 316–325, 326–335, 336–345, 346–355, 356–365, 366–375, 376–385, 386–395, 396–405, 406–415, 416–425, 426–435, 436–445, 446–455, 456–465, 466–475, 476–485, 486–495, 496–505, 506–515, 516–525, 527–536, 537–546, 547–556, 557–566, 567–576, 577–586, 587–596, 597–606, 607–616, 617–626, 628–637, 638–647, 648–657, 658–667, 668–677, 678–687, 688–697, 698–707, 708–717, 718–727, 729–738, 739–748, 749–758, 759–768, 769–778, 779–788, 789–798, and 799–808. Residues 196–808 form a 61 X 10 AA tandem repeats of [NSQ]-[NKQVGA]-[GSAQKRT]-[ASGDTK]-[KGTQSAV]-[KGAED]-[EQVGIPTDMA]-[EGVAS]-[AGVPETNS]-[AQNGPTVS] region; the sequence is SQGKKGQGAQ…QGKKSEMAPA (613 aa). Low complexity predominate over residues 197–208; the sequence is QGKKGQGAQNQA. Polar residues-rich tracts occupy residues 224-258, 274-338, 354-378, and 385-399; these read AQNQ…QNQA. The segment covering 420 to 433 has biased composition (basic and acidic residues); the sequence is KKGEAAQKQDKKIE. Composition is skewed to polar residues over residues 435–479, 495–519, and 526–540; these read AQNQ…QNQA. Positions 561-574 are enriched in basic and acidic residues; sequence KKGEAAQKQDKKIE. Polar residues-rich tracts occupy residues 576–720 and 736–769; these read AQNQ…QNQG and ASNQ…SPNQ. S786 carries the phosphoserine modification. Positions 811–821 are enriched in polar residues; sequence QKASMVQSQEA. Position 818 is a phosphoserine (S818). K823 participates in a covalent cross-link: Glycyl lysine isopeptide (Lys-Gly) (interchain with G-Cter in SUMO1). At K1135 the chain carries N6-acetyllysine. Phosphoserine is present on residues S1162 and S1178. 2 disordered regions span residues 1460-1481 and 1571-1605; these read MRSH…AEQD and TTQE…GTSV. Over residues 1576 to 1598 the composition is skewed to basic and acidic residues; it reads LTKEKDTVKKLQEQLGKAEDGSS.

As to expression, widely expressed.

It localises to the endoplasmic reticulum membrane. In terms of biological role, acts as a ribosome receptor and mediates interaction between the ribosome and the endoplasmic reticulum membrane. The chain is Ribosome-binding protein 1 (Rrbp1) from Mus musculus (Mouse).